A 436-amino-acid polypeptide reads, in one-letter code: NAD(P)-dependent benzaldehyde dehydrogenase (436 aa).

NADP(+)-binding positions include glycine 117–phenylalanine 119, lysine 143–threonine 147, arginine 175–asparagine 178, glycine 193–serine 194, glutamate 215–leucine 216, cysteine 249, and glutamate 337–phenylalanine 339. Active-site residues include glutamate 215 and cysteine 249.

Belongs to the aldehyde dehydrogenase family.

It carries out the reaction benzaldehyde + NAD(+) + H2O = benzoate + NADH + 2 H(+). It catalyses the reaction benzaldehyde + NADP(+) + H2O = benzoate + NADPH + 2 H(+). The protein operates within aromatic compound metabolism; (R)-mandelate degradation; benzoate from (R)-mandelate: step 4/4. In terms of biological role, NAD or NADP-dependent benzaldehyde dehydrogenase that catalyzes the conversion of benzaldehyde into benzoate in the (R)-mandelate degradation pathway. This chain is NAD(P)-dependent benzaldehyde dehydrogenase (mdlD), found in Pseudomonas putida (Arthrobacter siderocapsulatus).